We begin with the raw amino-acid sequence, 409 residues long: Mitochondrial inner membrane protein oxa1-2 (409 aa).

The helical transmembrane segment at 76–96 threads the bilayer; sequence VVYTPSLPLSSSVLASFSFLP. Residues 97-114 lie on the Mitochondrial intermembrane side of the membrane; that stretch reads HNILQNGLNTLHIWSGLP. The helical transmembrane segment at 115–135 threads the bilayer; sequence WWASIAACAVAMRIAVFPIML. The Mitochondrial matrix segment spans residues 136–188; the sequence is KMMKTSAKLAIINPKVAEHMSVLSKAKAEGNSELMMQATTQIQNLYKVNNVNP. The chain crosses the membrane as a helical span at residues 189 to 209; it reads LNLLSAPVFQGILFISFFYAL. Topologically, residues 210–235 are mitochondrial intermembrane; sequence KTMAGVPVEGFTDGGFWWVNDLSQPD. Residues 236-256 traverse the membrane as a helical segment; that stretch reads PLHIFPVANGLLMLLNIELGS. Residues 257–275 lie on the Mitochondrial matrix side of the membrane; sequence ETGSNKVAMSPSMKKFFRF. A helical membrane pass occupies residues 276 to 296; sequence LCLASPLFTMNFPMAIFMYWF. Topologically, residues 297 to 409 are mitochondrial intermembrane; that stretch reads PSNVFSVFQG…SVTKPTEKKD (113 aa). The disordered stretch occupies residues 369 to 409; that stretch reads TDTNNEQKPTNNSTITKATTLSDNSQNDKSSSVTKPTEKKD. Polar residues predominate over residues 374 to 403; that stretch reads EQKPTNNSTITKATTLSDNSQNDKSSSVTK.

The protein belongs to the OXA1/ALB3/YidC family.

The protein localises to the mitochondrion inner membrane. Its function is as follows. Required for the insertion of integral membrane proteins into the mitochondrial inner membrane. Essential for the activity and assembly of cytochrome c oxidase. It is essential for viability while oxa101 is not. When both are deleted the cell is non-viable, suggesting that oxa101 act as a back-up for oxa102. In Schizosaccharomyces pombe (strain 972 / ATCC 24843) (Fission yeast), this protein is Mitochondrial inner membrane protein oxa1-2 (oxa102).